A 290-amino-acid polypeptide reads, in one-letter code: MTMEYRTLELNIISAKDIKNVNLFSKMDVYAAVSLSGDPLHPQGATTHVHKDAGSNPTWNYPVKFSVNESLAKENRLSLEIKLISDRTLGDTVIGTVHVPLRELLDNPGDDSSFRQVSYQVMKQSRKSKGSLNFSYKFGEHVPAPAAKTPKAAKAGQEPVMAYPPAGAGSSSMPYGTPHPPPPQQYAATGYGYPPQQVHGGYPPQAAYGYPPQTGYGYPQQSGYGYPQQSGYGYPPQAQKPKKNKFGMGLGAGLLGGALGGMLIGDMVSDAAEYDAGYDAGFDDAGGFDF.

Residues 1-114 enclose the C2 domain; it reads MTMEYRTLEL…LDNPGDDSSF (114 aa). The Cytoplasmic portion of the chain corresponds to 1–245; it reads MTMEYRTLEL…PQAQKPKKNK (245 aa). A disordered region spans residues 167-187; it reads GAGSSSMPYGTPHPPPPQQYA. Residues 246-268 form a helical; Signal-anchor membrane-spanning segment; sequence FGMGLGAGLLGGALGGMLIGDMV. Topologically, residues 269–290 are lumenal; that stretch reads SDAAEYDAGYDAGFDDAGGFDF.

It is found in the endoplasmic reticulum membrane. It localises to the protein storage vacuole membrane. The protein localises to the cell membrane. In terms of biological role, may play a role in cold responses. The protein is Protein SRC2 of Glycine max (Soybean).